The sequence spans 892 residues: Protein translocase subunit SecA (892 aa).

ATP contacts are provided by residues Gln89, 107–111 (GEGKT), and Asp517. Zn(2+)-binding residues include Cys879, Cys881, Cys890, and His891.

This sequence belongs to the SecA family. In terms of assembly, monomer and homodimer. Part of the essential Sec protein translocation apparatus which comprises SecA, SecYEG and auxiliary proteins SecDF-YajC and YidC. Requires Zn(2+) as cofactor.

Its subcellular location is the cell inner membrane. It is found in the cytoplasm. The enzyme catalyses ATP + H2O + cellular proteinSide 1 = ADP + phosphate + cellular proteinSide 2.. Part of the Sec protein translocase complex. Interacts with the SecYEG preprotein conducting channel. Has a central role in coupling the hydrolysis of ATP to the transfer of proteins into and across the cell membrane, serving as an ATP-driven molecular motor driving the stepwise translocation of polypeptide chains across the membrane. This Ruthia magnifica subsp. Calyptogena magnifica protein is Protein translocase subunit SecA.